Consider the following 211-residue polypeptide: Protein-L-isoaspartate O-methyltransferase (211 aa).

Residue Ser60 is part of the active site.

It belongs to the methyltransferase superfamily. L-isoaspartyl/D-aspartyl protein methyltransferase family.

It is found in the cytoplasm. It catalyses the reaction [protein]-L-isoaspartate + S-adenosyl-L-methionine = [protein]-L-isoaspartate alpha-methyl ester + S-adenosyl-L-homocysteine. Functionally, catalyzes the methyl esterification of L-isoaspartyl residues in peptides and proteins that result from spontaneous decomposition of normal L-aspartyl and L-asparaginyl residues. It plays a role in the repair and/or degradation of damaged proteins. In Pseudomonas fluorescens (strain Pf0-1), this protein is Protein-L-isoaspartate O-methyltransferase.